We begin with the raw amino-acid sequence, 251 residues long: Exotoxin type A (251 aa).

The signal sequence occupies residues 1–30 (MENNKKVLKKMVFFVLVTFLGLTISQEVFA). Cysteines 117 and 128 form a disulfide.

The protein belongs to the staphylococcal/streptococcal toxin family.

In terms of biological role, causative agent of the symptoms associated with scarlet fever, have been associated with streptococcal toxic shock-like disease and may play a role in the early events of rheumatic fever. The polypeptide is Exotoxin type A (speA) (Streptococcus pyogenes serotype M18 (strain MGAS8232)).